A 289-amino-acid chain; its full sequence is Paired box protein 5 homolog (289 aa).

The segment at residues 29 to 155 (SHTGVNQLGG…SSINRIVRNK (127 aa)) is a DNA-binding region (paired). The segment at 32–88 (GVNQLGGVFVNGRPLADTVRAQIVEMSQHGTRPCDISRQLKVSHGCVSKILGRYYST) is PAI subdomain. Residues 107-155 (RVVECIAGYKRANPTMFAWEIRQKLIEDQICGEENVPSVSSINRIVRNK) form an RED subdomain region. Low complexity-rich tracts occupy residues 166-179 (SVTSSAARPSSATS) and 189-198 (VQQHMQQSTS). Residues 166 to 198 (SVTSSAARPSSATSHHQRSPPRGVQQHMQQSTS) form a disordered region.

Its subcellular location is the nucleus. The protein resides in the chromosome. Functionally, transcription factor. Binds to specific DNA sequence motifs in regulatory elements, for example in the genes encoding transcription factor lin-48, apoptosis regulator ced-9 and neuropeptide-like protein nlp-2. Specifies cell fate, playing an essential role in embryonic and larval development. Involved in morphogenesis of the vulva and uterus in hermaphrodites and of the rectal epithelium of the tail in males. Plays multiple roles in the development of the egg-laying system, acting in both lin-3/EGF-pathway-dependent and -independent processes. Positively regulates expression of neuropeptide-like proteins nlp-2 and nlp-7 in uvl cells in an EGF-pathway-dependent manner. Involved in negatively modulating apoptosis in germline and somatic cells, acting in partial redundancy with transcription factor pax-2, probably by directly regulating transcription of ced-9. Positively regulates transcription of lin-48 in hindgut cells and functions in the development of the hindgut. The chain is Paired box protein 5 homolog from Caenorhabditis elegans.